Reading from the N-terminus, the 247-residue chain is Probable transcriptional regulatory protein TDE_1487 (247 aa).

It belongs to the TACO1 family.

It is found in the cytoplasm. The chain is Probable transcriptional regulatory protein TDE_1487 from Treponema denticola (strain ATCC 35405 / DSM 14222 / CIP 103919 / JCM 8153 / KCTC 15104).